Reading from the N-terminus, the 504-residue chain is MASLYLPTIWASTLTAATIFIVAVLSKWLRKPRSFDVPIVGAESGDLNVLKARYVQEADALLREGYEKFKDAIFQVITPDGPRVFLPRKYAHDLKDYSRHEASGMKALADRHIGHYTTIDHESDIMLGAIKIDLNRNLGTFVGDVEHEVAFCFETQFPACDDWTPIDLHDKLLRVVAQASARIFVGYPMCRNEEWLECSTKFALDVMTGGEKLKQWHPYLRPIAQYFVPEMTRIRGDHQRALELLLPELNRRLAEPADPDSSPHNDMIQWMQDRARKTGDNSFDNKELANLQMLTATAAIHTTRLAIIHALYDLAARPEYVEPLRKEILEATKDSNGVLQKQHLTQMKMLDSFMKESQRHSPPSVATYQRKAMIPITLSNGFHIPAGTIVQCNTNILDETPPDWGDPHAFDGFRFYKLRNRTPDDINKFQFASPTYDSMQFGFGKDACPGRFFASNQIKIILAYILSHYDIKFEDSVVGRPKNFMFEVNVLADPTKMVLFKKIR.

Residues 4–24 traverse the membrane as a helical segment; the sequence is LYLPTIWASTLTAATIFIVAV. C448 contributes to the heme binding site.

The protein belongs to the cytochrome P450 family. Heme serves as cofactor.

It is found in the membrane. It functions in the pathway secondary metabolite biosynthesis. In terms of biological role, cytochrome P450 monooxygenase; part of the gene cluster that mediates the biosynthesis of the brasilane terpene glycosides brasilane D and E. The biosynthesis starts with the activity of the terpene cyclase braA that converts farnesyl pyrophosphate into the sesquiterpene alcohol trichobrasilenol. Subsequently, trichobrasilenol is glycosylated by the O-glycosyltransferase braB putatively using UDP-GlcNAc as sugar donor to yield brasilane A. The latter then undergoes two rounds of oxidation performed by the cytochrome P450 monooxygenase braC. In the first round braC hydroxylates C-12 forming brasilane D, which serves as substrate in the second round to establish the epoxide at the bond between C-5 and C-10 and oxidize the alcohol at C-12 to an aldehyde leading to the final product brasilane E. The chain is Cytochrome P450 monooxygenase braC from Annulohypoxylon truncatum (Hypoxylon truncatum).